An 88-amino-acid polypeptide reads, in one-letter code: Small ribosomal subunit protein bS20 (88 aa).

Positions 1 to 27 (MANSKSAKKRALQSEKRRQHNASRRSM) are disordered.

This sequence belongs to the bacterial ribosomal protein bS20 family.

Binds directly to 16S ribosomal RNA. The protein is Small ribosomal subunit protein bS20 of Shewanella baltica (strain OS223).